A 220-amino-acid polypeptide reads, in one-letter code: 3-keto-L-gulonate-6-phosphate decarboxylase SgbH (220 aa).

Residue Asp-11 participates in substrate binding. Positions 33 and 62 each coordinate Mg(2+). Arg-192 serves as a coordination point for substrate.

The protein belongs to the HPS/KGPDC family. KGPDC subfamily. As to quaternary structure, homodimer. Mg(2+) serves as cofactor.

It carries out the reaction 3-dehydro-L-gulonate 6-phosphate + H(+) = L-xylulose 5-phosphate + CO2. Functionally, catalyzes the decarboxylation of 3-keto-L-gulonate-6-P into L-xylulose-5-P. May be involved in the utilization of 2,3-diketo-L-gulonate. The chain is 3-keto-L-gulonate-6-phosphate decarboxylase SgbH (sgbH) from Escherichia coli (strain K12).